The following is a 285-amino-acid chain: Diphthine methyl ester synthase (285 aa).

Residues Leu-9, Asp-84, Gly-87, 112–113 (SI), and Leu-163 each bind S-adenosyl-L-methionine. Ser-171 carries the phosphoserine modification. 2 residues coordinate S-adenosyl-L-methionine: Val-225 and His-250.

Belongs to the diphthine synthase family.

The catalysed reaction is 2-[(3S)-amino-3-carboxypropyl]-L-histidyl-[translation elongation factor 2] + 4 S-adenosyl-L-methionine = diphthine methyl ester-[translation elongation factor 2] + 4 S-adenosyl-L-homocysteine + 3 H(+). The protein operates within protein modification; peptidyl-diphthamide biosynthesis. In terms of biological role, S-adenosyl-L-methionine-dependent methyltransferase that catalyzes four methylations of the modified target histidine residue in translation elongation factor 2 (EF-2), to form an intermediate called diphthine methyl ester. The four successive methylation reactions represent the second step of diphthamide biosynthesis. In Homo sapiens (Human), this protein is Diphthine methyl ester synthase (DPH5).